The primary structure comprises 235 residues: MSNPNYKIPIKEWIVSERPRELLLSKGPEHLPDAKLLAIILRTGNKEETAEDLARRLLNTFGGFTGLYRASVEELLQIKGMGKAKAAQVKAALEIGKRFLQNETVEEARITTPEDAIEYAARYFSSMLMNEGKEHFWILLLDRKNRPIKHVEISVGSSIQTTVDPKEILKQVSLTSAQALILIHNHPSGDPSPSREDVAVTKQLKQACELVGAQLLDHIIVGKNQHVSLAREKLI.

In terms of domain architecture, MPN spans 109 to 235 (RITTPEDAIE…HVSLAREKLI (127 aa)). Positions 184, 186, and 197 each coordinate Zn(2+). A JAMM motif motif is present at residues 184–197 (HNHPSGDPSPSRED).

This sequence belongs to the UPF0758 family.

In Coprothermobacter proteolyticus (strain ATCC 35245 / DSM 5265 / OCM 4 / BT), this protein is UPF0758 protein COPRO5265_1522.